The following is a 489-amino-acid chain: Cytochrome P450 302a1, mitochondrial (489 aa).

Cysteine 434 provides a ligand contact to heme.

Belongs to the cytochrome P450 family. It depends on heme as a cofactor. Complex coexpression pattern of dib (disembodied) and sad (shade) in the early embryo that restricts to the prothoracic gland cells of the developing ring gland during late embryogenesis. In larvae and adult, coexpression is seen in prothoracic gland and follicle cells of the ovary. In adults, coexpression is seen in the follicle cells.

The protein resides in the mitochondrion membrane. It carries out the reaction 2,22-dideoxyecdysone + 2 reduced [adrenodoxin] + O2 + 2 H(+) = 2-deoxyecdysone + 2 oxidized [adrenodoxin] + H2O. It functions in the pathway steroid biosynthesis; ecdysteroid biosynthesis. Functionally, required for CNS development; negatively regulates glial cell division in the embryonic midline. Involved in the metabolism of insect hormones; responsible for ecdysteroid C22-hydroxylase activity. May be involved in the breakdown of synthetic insecticides. The protein is Cytochrome P450 302a1, mitochondrial of Drosophila melanogaster (Fruit fly).